Here is a 308-residue protein sequence, read N- to C-terminus: Ribosomal protein L11 methyltransferase (308 aa).

Positions 160, 181, 203, and 245 each coordinate S-adenosyl-L-methionine.

It belongs to the methyltransferase superfamily. PrmA family.

It is found in the cytoplasm. The enzyme catalyses L-lysyl-[protein] + 3 S-adenosyl-L-methionine = N(6),N(6),N(6)-trimethyl-L-lysyl-[protein] + 3 S-adenosyl-L-homocysteine + 3 H(+). In terms of biological role, methylates ribosomal protein L11. The protein is Ribosomal protein L11 methyltransferase of Thermoanaerobacter sp. (strain X514).